Reading from the N-terminus, the 300-residue chain is Protein SPEAR2 (300 aa).

The segment covering 1–11 (MCSNNNTSSGS) has biased composition (polar residues). Residues 1–64 (MCSNNNTSSG…PPLSSSPSLP (64 aa)) are disordered. The segment covering 25 to 38 (CRKKQKKDKVRRRG) has biased composition (basic residues). The SPL signature appears at 37–45 (RGPGVAELE). Residues 43–54 (ELEKIRLQEEYK) are compositionally biased toward basic and acidic residues. Positions 55–64 (PPLSSSPSLP) are enriched in low complexity. The EAR signature appears at 294–300 (IDLNLKL).

As to quaternary structure, homodimer and heterodimer with SPL and SPEARs. Interacts with SPL, SPEAR1, SPEAR3 and SPEAR4. As to expression, expressed in leaves.

Functionally, adapter-like transcriptional repressor recruiting TPL/TPR corepressors to inhibit TCP transcription factors. May be involved in leaf development. In Arabidopsis thaliana (Mouse-ear cress), this protein is Protein SPEAR2.